The chain runs to 29 residues: Cytochrome b6-f complex subunit 8 (29 aa).

The chain crosses the membrane as a helical span at residues 3–23 (ILSLGWAALMTMFTFSLALTV).

This sequence belongs to the PetN family. As to quaternary structure, the 4 large subunits of the cytochrome b6-f complex are cytochrome b6, subunit IV (17 kDa polypeptide, PetD), cytochrome f and the Rieske protein, while the 4 small subunits are PetG, PetL, PetM and PetN. The complex functions as a dimer.

The protein resides in the plastid. It localises to the chloroplast thylakoid membrane. In terms of biological role, component of the cytochrome b6-f complex, which mediates electron transfer between photosystem II (PSII) and photosystem I (PSI), cyclic electron flow around PSI, and state transitions. This is Cytochrome b6-f complex subunit 8 from Phaeodactylum tricornutum (strain CCAP 1055/1).